The chain runs to 396 residues: Multidrug efflux protein YfmO (396 aa).

Helical transmembrane passes span 20–40 (VWAVAFACVISFMGIGLVDPI), 56–76 (SLLFTSYLLVTGFMMFFSGAI), 80–100 (IGAKWTLILGLIFIIVFAGLG), 114–134 (GGWGLGNALFISTALAVIVGV), 142–162 (AIILYEAALGLGISVGPLAGG), 171–191 (APFFGVSVLMFIALIAISFML), 214–234 (GLLTMAVSAFLYNFGFFILLA), 249–269 (YVFFGWGLLLAITSVFTAPLV), 278–298 (SLVVLFIAFAAILVIMGIWTD), 301–321 (TLIITCIVVAGAVLGMVNTIM), 339–359 (AYSSVRFIGGALAPWIAGMLS), and 364–384 (ASTPYTVGGIVVFVGMLVLLM).

This sequence belongs to the major facilitator superfamily.

It is found in the cell membrane. Acts to efflux copper or a copper complex. It is possible that YfmO could contribute to copper resistance. This Bacillus subtilis (strain 168) protein is Multidrug efflux protein YfmO (yfmO).